The following is a 358-amino-acid chain: Pseudouridylate synthase RPUSD4, mitochondrial (358 aa).

Residues 1 to 12 (MRHAREVTFARL) constitute a mitochondrion transit peptide.

Belongs to the pseudouridine synthase RluA family.

It is found in the mitochondrion matrix. The protein resides in the nucleus. The protein localises to the cytoplasm. It carries out the reaction uridine in 5S rRNA = pseudouridine in 5S rRNA. It catalyses the reaction a uridine in tRNA = a pseudouridine in tRNA. The enzyme catalyses a uridine in mRNA = a pseudouridine in mRNA. Functionally, catalyzes uridine to pseudouridine isomerization (pseudouridylation) of different mitochondrial RNA substrates. Acts on position 1397 in 16S mitochondrial ribosomal RNA (16S mt-rRNA). This modification is required for the assembly of 16S mt-rRNA into a functional mitochondrial ribosome. Acts on position 39 in mitochondrial tRNA(Phe). Also catalyzes pseudouridylation of mRNAs in nucleus: acts as a regulator of pre-mRNA splicing by mediating pseudouridylation of pre-mRNAs at locations associated with alternatively spliced regions. Pseudouridylation of pre-mRNAs near splice sites directly regulates mRNA splicing and mRNA 3'-end processing. The chain is Pseudouridylate synthase RPUSD4, mitochondrial from Danio rerio (Zebrafish).